A 428-amino-acid polypeptide reads, in one-letter code: 3-phosphoshikimate 1-carboxyvinyltransferase (428 aa).

3-phosphoshikimate contacts are provided by Lys21, Ser22, and Arg26. Lys21 is a binding site for phosphoenolpyruvate. The phosphoenolpyruvate site is built by Gly93 and Arg121. 4 residues coordinate 3-phosphoshikimate: Ser166, Gln168, Asp314, and Lys341. Position 168 (Gln168) interacts with phosphoenolpyruvate. Catalysis depends on Asp314, which acts as the Proton acceptor. Residues Arg345 and Arg388 each coordinate phosphoenolpyruvate.

Belongs to the EPSP synthase family. As to quaternary structure, monomer.

It is found in the cytoplasm. It carries out the reaction 3-phosphoshikimate + phosphoenolpyruvate = 5-O-(1-carboxyvinyl)-3-phosphoshikimate + phosphate. It participates in metabolic intermediate biosynthesis; chorismate biosynthesis; chorismate from D-erythrose 4-phosphate and phosphoenolpyruvate: step 6/7. Its function is as follows. Catalyzes the transfer of the enolpyruvyl moiety of phosphoenolpyruvate (PEP) to the 5-hydroxyl of shikimate-3-phosphate (S3P) to produce enolpyruvyl shikimate-3-phosphate and inorganic phosphate. The chain is 3-phosphoshikimate 1-carboxyvinyltransferase from Syntrophomonas wolfei subsp. wolfei (strain DSM 2245B / Goettingen).